The following is a 734-amino-acid chain: Photosystem I P700 chlorophyll a apoprotein A2 (734 aa).

The next 8 helical transmembrane spans lie at 46-69 (IFAS…FHVA), 135-158 (LYNG…LHLQ), 175-199 (LNHH…HVAI), 273-291 (IAHH…GHMY), 330-353 (IHFQ…QHMY), 369-395 (AALY…IFFI), 417-439 (AIIS…LYVH), and 517-535 (FLVH…LILV). The [4Fe-4S] cluster site is built by cysteine 559 and cysteine 568. 2 consecutive transmembrane segments (helical) span residues 575–596 (AFYL…YWHW) and 643–665 (LSVW…MFLI). Residues histidine 654, methionine 662, and tyrosine 670 each coordinate chlorophyll a. Phylloquinone is bound at residue tryptophan 671. Residues 707-727 (LVGLAHFSVGYIFTYAAFLIA) form a helical membrane-spanning segment.

This sequence belongs to the PsaA/PsaB family. As to quaternary structure, the PsaA/B heterodimer binds the P700 chlorophyll special pair and subsequent electron acceptors. PSI consists of a core antenna complex that captures photons, and an electron transfer chain that converts photonic excitation into a charge separation. The eukaryotic PSI reaction center is composed of at least 11 subunits. Requires P700 is a chlorophyll a/chlorophyll a' dimer, A0 is one or more chlorophyll a, A1 is one or both phylloquinones and FX is a shared 4Fe-4S iron-sulfur center. as cofactor.

The protein resides in the plastid. It localises to the chloroplast thylakoid membrane. It carries out the reaction reduced [plastocyanin] + hnu + oxidized [2Fe-2S]-[ferredoxin] = oxidized [plastocyanin] + reduced [2Fe-2S]-[ferredoxin]. In terms of biological role, psaA and PsaB bind P700, the primary electron donor of photosystem I (PSI), as well as the electron acceptors A0, A1 and FX. PSI is a plastocyanin-ferredoxin oxidoreductase, converting photonic excitation into a charge separation, which transfers an electron from the donor P700 chlorophyll pair to the spectroscopically characterized acceptors A0, A1, FX, FA and FB in turn. Oxidized P700 is reduced on the lumenal side of the thylakoid membrane by plastocyanin. In Morus indica (Mulberry), this protein is Photosystem I P700 chlorophyll a apoprotein A2.